Consider the following 160-residue polypeptide: Cytochrome b6-f complex subunit 4 (160 aa).

The next 3 helical transmembrane spans lie at 36 to 56 (LLYIFPVVILGTFACLVGLAV), 95 to 115 (LLGIVLQTLVPLGLMLIPFIE), and 128 to 148 (IAMAFFLFGTMITIYLGIGAC).

The protein belongs to the cytochrome b family. PetD subfamily. As to quaternary structure, the 4 large subunits of the cytochrome b6-f complex are cytochrome b6, subunit IV (17 kDa polypeptide, PetD), cytochrome f and the Rieske protein, while the 4 small subunits are PetG, PetL, PetM and PetN. The complex functions as a dimer.

It localises to the cellular thylakoid membrane. Component of the cytochrome b6-f complex, which mediates electron transfer between photosystem II (PSII) and photosystem I (PSI), cyclic electron flow around PSI, and state transitions. The polypeptide is Cytochrome b6-f complex subunit 4 (Prochlorococcus marinus (strain MIT 9303)).